The sequence spans 951 residues: Sodium/potassium exporting P-type ATPase 1 (951 aa).

Residues 1-57 are Cytoplasmic-facing; it reads MMGANSTEWHGQSVEQVTELLGTDVERGLKESVVGQLQKQFGPNELKGQRGVNPWKV. A helical membrane pass occupies residues 58–78; sequence LLAQFTNGLTVILLIATVVSF. The Extracellular portion of the chain corresponds to 79-82; sequence AVQD. The chain crosses the membrane as a helical span at residues 83–103; the sequence is HAEGGVLAFVIIFNASVGFVQ. The Cytoplasmic segment spans residues 104–247; the sequence is EYRAEKTMDA…TPMQKRLNRM (144 aa). Residues 248-268 form a helical membrane-spanning segment; it reads AYILFGISLVLAVIVFAVNKF. Residues 269–273 lie on the Extracellular side of the membrane; sequence EFNTD. The chain crosses the membrane as a helical span at residues 274–294; that stretch reads IIIYAVSLGIAVIPEGLIAVI. Topologically, residues 295–717 are cytoplasmic; sequence TIVMALGVRR…GRRIFSNIRK (423 aa). Residue D330 is the 4-aspartylphosphate intermediate of the active site. D330 and T332 together coordinate Mg(2+). ATP-binding residues include T332, E414, K467, R511, T575, G576, D577, R636, and K642. D661 serves as a coordination point for Mg(2+). N664 serves as a coordination point for ATP. A helical transmembrane segment spans residues 718–738; the sequence is FILHLVSTNVGEVIVLIIGLA. Residues 739–743 lie on the Extracellular side of the membrane; sequence FKDRN. A helical transmembrane segment spans residues 744-764; sequence GVSVFPLAPVQILFMNMVTST. The Cytoplasmic portion of the chain corresponds to 765–799; it reads PPAMALGVEAASKDTMKVPPHTKGLFGKEVLADMM. Residues 800 to 820 form a helical membrane-spanning segment; the sequence is VYGIIMGSLILVDWVLVIYAF. The Extracellular segment spans residues 821 to 840; it reads GDSQLGLECNSDRMLNECNT. Residues 841-861 traverse the membrane as a helical segment; it reads VFRARSTIMVALIWMLLLHAY. Over 862–885 the chain is Cytoplasmic; it reads NCRHPRASLFTAEGGGASKLFSNR. The chain crosses the membrane as a helical span at residues 886-906; it reads LLVWSVLLGSLMPIPTVYIPT. Over 907 to 916 the chain is Extracellular; the sequence is LNTKIFKQET. A helical transmembrane segment spans residues 917–937; the sequence is ISWEWSIVVVSVVAFFFLSEL. The Cytoplasmic portion of the chain corresponds to 938-951; that stretch reads YKLIKRNVMTSRVI.

It belongs to the cation transport ATPase (P-type) (TC 3.A.3) family. Type IID subfamily. Mg(2+) is required as a cofactor. In terms of processing, the active site is phosphorylated in presence of sodium or potassium and in conditions of higher pH. Not phosphorylated in presence of calcium ions.

It localises to the cell membrane. It catalyses the reaction Na(+)(in) + ATP + H2O = Na(+)(out) + ADP + phosphate + H(+). The catalysed reaction is K(+)(in) + ATP + H2O = K(+)(out) + ADP + phosphate + H(+). Catalyzes the hydrolysis of ATP coupled with the export of sodium and potassium from the cell. Appears to export potassium more efficiently than sodium. May transport other cations such as lithium. Sodium/potassium efflux ATPases are involved in salt tolerance and maintaining the membrane potential across the plasma membrane in high salinity (Na+) or alkaline (K+) environments. The polypeptide is Sodium/potassium exporting P-type ATPase 1 (Marchantia polymorpha (Common liverwort)).